The chain runs to 136 residues: Histone H3 (136 aa).

Residues 1 to 43 form a disordered region; it reads MARTKQTARKSTGGKAPRKQLASKAARKSAPSTGGVKKPHRYK. Lys5 is subject to N6,N6,N6-trimethyllysine; alternate. At Lys5 the chain carries N6,N6-dimethyllysine; alternate. N6-methyllysine; alternate occurs at positions 5 and 10. Residue Lys10 is modified to N6-acetyllysine; alternate. At Ser11 the chain carries Phosphoserine. Position 15 is an N6,N6-dimethyllysine; alternate (Lys15). Residues Lys15, Lys19, Lys24, Lys28, and Lys37 each carry the N6-acetyllysine; alternate modification. Residues Lys19, Lys24, Lys28, and Lys37 each carry the N6-methyllysine; alternate modification. N6,N6,N6-trimethyllysine; alternate occurs at positions 28 and 37. Lys28 and Lys37 each carry N6,N6-dimethyllysine; alternate. Residues Lys57 and Lys65 each carry the N6-acetyllysine modification. At Lys80 the chain carries N6,N6,N6-trimethyllysine; alternate. Lys80 carries the post-translational modification N6,N6-dimethyllysine; alternate. An N6-methyllysine; alternate modification is found at Lys80.

This sequence belongs to the histone H3 family. As to quaternary structure, the nucleosome is a histone octamer containing two molecules each of H2A, H2B, H3 and H4 assembled in one H3-H4 heterotetramer and two H2A-H2B heterodimers. The octamer wraps approximately 147 bp of DNA. In terms of processing, phosphorylated to form H3S10ph. H3S10ph promotes subsequent H3K14ac formation and is required for transcriptional activation through TBP recruitment to the promoters. Post-translationally, mono-, di- and trimethylated by the COMPASS complex to form H3K4me1/2/3. H3K4me activates gene expression by regulating transcription elongation and plays a role in telomere length maintenance. H3K4me enrichment correlates with transcription levels, and occurs in a 5' to 3' gradient with H3K4me3 enrichment at the 5'-end of genes, shifting to H3K4me2 and then H3K4me1. Methylated by SET2 to form H3K36me. H3K36me represses gene expression. Methylated by DOT1 to form H3K79me. H3K79me is required for association of SIR proteins with telomeric regions and for telomeric silencing. The COMPASS-mediated formation of H3K4me2/3 and the DOT1-mediated formation of H3K79me require H2BK123ub1. Acetylation of histone H3 leads to transcriptional activation. H3K14ac formation by GCN5 is promoted by H3S10ph. H3K14ac can also be formed by ESA1. H3K56ac formation occurs predominantly in newly synthesized H3 molecules during G1, S and G2/M of the cell cycle and may be involved in DNA repair.

The protein localises to the nucleus. It is found in the chromosome. Functionally, core component of nucleosome. Nucleosomes wrap and compact DNA into chromatin, limiting DNA accessibility to the cellular machineries which require DNA as a template. Histones thereby play a central role in transcription regulation, DNA repair, DNA replication and chromosomal stability. DNA accessibility is regulated via a complex set of post-translational modifications of histones, also called histone code, and nucleosome remodeling. This chain is Histone H3 (HHT1), found in Phaeosphaeria nodorum (strain SN15 / ATCC MYA-4574 / FGSC 10173) (Glume blotch fungus).